A 491-amino-acid chain; its full sequence is Argininosuccinate lyase (491 aa).

Belongs to the lyase 1 family. Argininosuccinate lyase subfamily.

It is found in the cytoplasm. The catalysed reaction is 2-(N(omega)-L-arginino)succinate = fumarate + L-arginine. It participates in amino-acid biosynthesis; L-arginine biosynthesis; L-arginine from L-ornithine and carbamoyl phosphate: step 3/3. The chain is Argininosuccinate lyase from Methanosarcina mazei (strain ATCC BAA-159 / DSM 3647 / Goe1 / Go1 / JCM 11833 / OCM 88) (Methanosarcina frisia).